Here is a 483-residue protein sequence, read N- to C-terminus: ATP synthase subunit beta (483 aa).

ATP is bound at residue 169 to 176 (GGAGVGKT).

The protein belongs to the ATPase alpha/beta chains family. As to quaternary structure, F-type ATPases have 2 components, CF(1) - the catalytic core - and CF(0) - the membrane proton channel. CF(1) has five subunits: alpha(3), beta(3), gamma(1), delta(1), epsilon(1). CF(0) has three main subunits: a(1), b(2) and c(9-12). The alpha and beta chains form an alternating ring which encloses part of the gamma chain. CF(1) is attached to CF(0) by a central stalk formed by the gamma and epsilon chains, while a peripheral stalk is formed by the delta and b chains.

It localises to the cell membrane. The enzyme catalyses ATP + H2O + 4 H(+)(in) = ADP + phosphate + 5 H(+)(out). Functionally, produces ATP from ADP in the presence of a proton gradient across the membrane. The catalytic sites are hosted primarily by the beta subunits. This is ATP synthase subunit beta from Corynebacterium glutamicum (strain ATCC 13032 / DSM 20300 / JCM 1318 / BCRC 11384 / CCUG 27702 / LMG 3730 / NBRC 12168 / NCIMB 10025 / NRRL B-2784 / 534).